The sequence spans 954 residues: Glycine dehydrogenase (decarboxylating) (954 aa).

K701 carries the N6-(pyridoxal phosphate)lysine modification.

It belongs to the GcvP family. In terms of assembly, the glycine cleavage system is composed of four proteins: P, T, L and H. The cofactor is pyridoxal 5'-phosphate.

The enzyme catalyses N(6)-[(R)-lipoyl]-L-lysyl-[glycine-cleavage complex H protein] + glycine + H(+) = N(6)-[(R)-S(8)-aminomethyldihydrolipoyl]-L-lysyl-[glycine-cleavage complex H protein] + CO2. In terms of biological role, the glycine cleavage system catalyzes the degradation of glycine. The P protein binds the alpha-amino group of glycine through its pyridoxal phosphate cofactor; CO(2) is released and the remaining methylamine moiety is then transferred to the lipoamide cofactor of the H protein. The protein is Glycine dehydrogenase (decarboxylating) of Bordetella parapertussis (strain 12822 / ATCC BAA-587 / NCTC 13253).